Here is a 159-residue protein sequence, read N- to C-terminus: Transcriptional repressor NrdR (159 aa).

Residues 1–22 (MRCPFCGSEDTQVKDSRPAEDN) form a disordered region. A zinc finger lies at 3 to 34 (CPFCGSEDTQVKDSRPAEDNTSIRRRRICPDC). Residues 11–22 (TQVKDSRPAEDN) show a composition bias toward basic and acidic residues. The ATP-cone domain maps to 49-139 (LMVIKKSGRK…VYRDFSHAED (91 aa)).

This sequence belongs to the NrdR family. Requires Zn(2+) as cofactor.

In terms of biological role, negatively regulates transcription of bacterial ribonucleotide reductase nrd genes and operons by binding to NrdR-boxes. This Agrobacterium fabrum (strain C58 / ATCC 33970) (Agrobacterium tumefaciens (strain C58)) protein is Transcriptional repressor NrdR.